A 361-amino-acid chain; its full sequence is MALTRLLIKDFRNIENADLALAPGFNFLVGPNGSGKTSVLEAIYTLGHGRAFRSLQAGRVIRHDQDAFVLHGRIATAEREISVGLTKNRAGDSKVRIDGSDGHKVAELAQMLPMQLITPEGFTLLNGGPKYRRAYIDWGCFHNEPGFFHAWSNLRRLLKQRNAALRQVSRYQQIRAWDQELAPLAEQISQWRAAYSEAIAADISATCAQFLPEFQLSFSFQRGWDKESHYAELLERNFERDRALTYTASGPHKADFRIRAEGTPVEDLLSRGQLKLLMCALRLAQGEFLTRQNGQRCLYLIDDFASELDETRRHLLAARLKATQAQVFVSAIAAEHVFDMTDEKGKMFHVEQGKIAVQPED.

30 to 37 provides a ligand contact to ATP; the sequence is GPNGSGKT.

It belongs to the RecF family.

The protein resides in the cytoplasm. The RecF protein is involved in DNA metabolism; it is required for DNA replication and normal SOS inducibility. RecF binds preferentially to single-stranded, linear DNA. It also seems to bind ATP. The polypeptide is DNA replication and repair protein RecF (Erwinia tasmaniensis (strain DSM 17950 / CFBP 7177 / CIP 109463 / NCPPB 4357 / Et1/99)).